A 217-amino-acid polypeptide reads, in one-letter code: 3-demethoxyubiquinol 3-hydroxylase (217 aa).

6 residues coordinate Fe cation: E66, E96, H99, E148, E180, and H183.

The protein belongs to the COQ7 family. Fe cation serves as cofactor.

The protein localises to the cell membrane. It catalyses the reaction a 5-methoxy-2-methyl-3-(all-trans-polyprenyl)benzene-1,4-diol + AH2 + O2 = a 3-demethylubiquinol + A + H2O. Its pathway is cofactor biosynthesis; ubiquinone biosynthesis. Functionally, catalyzes the hydroxylation of 2-nonaprenyl-3-methyl-6-methoxy-1,4-benzoquinol during ubiquinone biosynthesis. This Xylella fastidiosa (strain 9a5c) protein is 3-demethoxyubiquinol 3-hydroxylase.